The primary structure comprises 182 residues: Carbonic anhydrase (182 aa).

Mg(2+) contacts are provided by histidine 64, histidine 81, and histidine 86.

This sequence belongs to the gamma-class carbonic anhydrase family. As to quaternary structure, homotrimer. Mg(2+) serves as cofactor. It depends on Zn(2+) as a cofactor.

The enzyme catalyses hydrogencarbonate + H(+) = CO2 + H2O. Its function is as follows. Reversible hydration of carbon dioxide. This is Carbonic anhydrase from Geobacillus kaustophilus (strain HTA426).